A 129-amino-acid chain; its full sequence is Glycine cleavage system H protein (129 aa).

The region spanning 24-106 (SYTVGITEHA…YGDGWFFRIM (83 aa)) is the Lipoyl-binding domain. Lys65 carries the N6-lipoyllysine modification.

It belongs to the GcvH family. In terms of assembly, the glycine cleavage system is composed of four proteins: P, T, L and H. It depends on (R)-lipoate as a cofactor.

In terms of biological role, the glycine cleavage system catalyzes the degradation of glycine. The H protein shuttles the methylamine group of glycine from the P protein to the T protein. The polypeptide is Glycine cleavage system H protein (Shewanella denitrificans (strain OS217 / ATCC BAA-1090 / DSM 15013)).